A 182-amino-acid chain; its full sequence is NADH-quinone oxidoreductase subunit 9 (182 aa).

2 consecutive 4Fe-4S ferredoxin-type domains span residues 43-73 (LTRH…VEPA) and 89-118 (KVYE…LGYD). Residues Cys-53, Cys-56, Ser-57, Cys-59, Cys-63, Cys-98, Ile-99, Cys-101, Cys-104, and Cys-108 each coordinate [4Fe-4S] cluster.

The protein belongs to the complex I 23 kDa subunit family. In terms of assembly, NDH-1 is composed of 15 different subunits, Nqo1 to Nqo15. The complex has a L-shaped structure, with the hydrophobic arm (subunits Nqo7, Nqo8 and Nqo10 to Nqo14) embedded in the membrane and the hydrophilic peripheral arm (subunits Nqo1 to Nqo6, Nqo9 and Nqo15) protruding into the bacterial cytoplasm. The hydrophilic domain contains all the redox centers. The cofactor is [4Fe-4S] cluster.

It is found in the cell membrane. It catalyses the reaction a quinone + NADH + 5 H(+)(in) = a quinol + NAD(+) + 4 H(+)(out). NDH-1 shuttles electrons from NADH, via FMN and iron-sulfur (Fe-S) centers, to quinones in the respiratory chain. The immediate electron acceptor for the enzyme in this species is menaquinone. Couples the redox reaction to proton translocation (for every two electrons transferred, four hydrogen ions are translocated across the cytoplasmic membrane), and thus conserves the redox energy in a proton gradient required for the synthesis of ATP. The role of the Nqo9 subunit appears to provide a 'connecting chain' of two clusters between cluster N5 and the terminal cluster N2, and to stabilize the structure of the complex by interacting with other subunits. This is NADH-quinone oxidoreductase subunit 9 (nqo9) from Thermus thermophilus (strain ATCC 27634 / DSM 579 / HB8).